We begin with the raw amino-acid sequence, 492 residues long: Steroid 21-hydroxylase (492 aa).

Heme b contacts are provided by R91 and K120. R231 lines the 17alpha-hydroxyprogesterone pocket. R231 is a progesterone binding site. 3 residues coordinate heme b: H363, R424, and C426.

This sequence belongs to the cytochrome P450 family. It depends on heme b as a cofactor.

The protein localises to the endoplasmic reticulum membrane. It localises to the microsome membrane. It catalyses the reaction 17alpha-hydroxyprogesterone + reduced [NADPH--hemoprotein reductase] + O2 = 11-deoxycortisol + oxidized [NADPH--hemoprotein reductase] + H2O + H(+). The catalysed reaction is progesterone + reduced [NADPH--hemoprotein reductase] + O2 = 21-hydroxyprogesterone + oxidized [NADPH--hemoprotein reductase] + H2O + H(+). Its function is as follows. Specifically catalyzes the 21-hydroxylation of steroids. Required for the adrenal synthesis of mineralocorticoids and glucocorticoids. This is Steroid 21-hydroxylase (CYP21) from Felis catus (Cat).